Reading from the N-terminus, the 316-residue chain is 4-hydroxy-3-methylbut-2-enyl diphosphate reductase (316 aa).

Cysteine 18 contacts [4Fe-4S] cluster. Histidine 47 and histidine 80 together coordinate (2E)-4-hydroxy-3-methylbut-2-enyl diphosphate. Dimethylallyl diphosphate is bound by residues histidine 47 and histidine 80. Isopentenyl diphosphate contacts are provided by histidine 47 and histidine 80. Cysteine 102 is a binding site for [4Fe-4S] cluster. (2E)-4-hydroxy-3-methylbut-2-enyl diphosphate is bound at residue histidine 130. A dimethylallyl diphosphate-binding site is contributed by histidine 130. Histidine 130 provides a ligand contact to isopentenyl diphosphate. Glutamate 132 (proton donor) is an active-site residue. Threonine 171 contacts (2E)-4-hydroxy-3-methylbut-2-enyl diphosphate. A [4Fe-4S] cluster-binding site is contributed by cysteine 201. Positions 229, 230, 231, and 274 each coordinate (2E)-4-hydroxy-3-methylbut-2-enyl diphosphate. Residues serine 229, serine 230, asparagine 231, and serine 274 each coordinate dimethylallyl diphosphate. Residues serine 229, serine 230, asparagine 231, and serine 274 each contribute to the isopentenyl diphosphate site.

This sequence belongs to the IspH family. [4Fe-4S] cluster serves as cofactor.

It carries out the reaction isopentenyl diphosphate + 2 oxidized [2Fe-2S]-[ferredoxin] + H2O = (2E)-4-hydroxy-3-methylbut-2-enyl diphosphate + 2 reduced [2Fe-2S]-[ferredoxin] + 2 H(+). The catalysed reaction is dimethylallyl diphosphate + 2 oxidized [2Fe-2S]-[ferredoxin] + H2O = (2E)-4-hydroxy-3-methylbut-2-enyl diphosphate + 2 reduced [2Fe-2S]-[ferredoxin] + 2 H(+). It participates in isoprenoid biosynthesis; dimethylallyl diphosphate biosynthesis; dimethylallyl diphosphate from (2E)-4-hydroxy-3-methylbutenyl diphosphate: step 1/1. Its pathway is isoprenoid biosynthesis; isopentenyl diphosphate biosynthesis via DXP pathway; isopentenyl diphosphate from 1-deoxy-D-xylulose 5-phosphate: step 6/6. In terms of biological role, catalyzes the conversion of 1-hydroxy-2-methyl-2-(E)-butenyl 4-diphosphate (HMBPP) into a mixture of isopentenyl diphosphate (IPP) and dimethylallyl diphosphate (DMAPP). Acts in the terminal step of the DOXP/MEP pathway for isoprenoid precursor biosynthesis. This chain is 4-hydroxy-3-methylbut-2-enyl diphosphate reductase, found in Ruegeria sp. (strain TM1040) (Silicibacter sp.).